Here is a 257-residue protein sequence, read N- to C-terminus: Glutamate racemase (257 aa).

Residues Asp12–Ser13 and Tyr44–Gly45 each bind substrate. Catalysis depends on Cys75, which acts as the Proton donor/acceptor. Position 76-77 (Asn76–Thr77) interacts with substrate. The active-site Proton donor/acceptor is the Cys185. A substrate-binding site is contributed by Thr186–His187.

It belongs to the aspartate/glutamate racemases family.

It catalyses the reaction L-glutamate = D-glutamate. It participates in cell wall biogenesis; peptidoglycan biosynthesis. Provides the (R)-glutamate required for cell wall biosynthesis. The polypeptide is Glutamate racemase (Clostridium botulinum (strain Okra / Type B1)).